The primary structure comprises 312 residues: tRNA dimethylallyltransferase (312 aa).

Gly13–Thr20 contributes to the ATP binding site. Thr15–Thr20 contacts substrate. Interaction with substrate tRNA stretches follow at residues Asp38–Met41, Gln162–Arg166, and Arg244–Arg249.

It belongs to the IPP transferase family. In terms of assembly, monomer. It depends on Mg(2+) as a cofactor.

It catalyses the reaction adenosine(37) in tRNA + dimethylallyl diphosphate = N(6)-dimethylallyladenosine(37) in tRNA + diphosphate. Catalyzes the transfer of a dimethylallyl group onto the adenine at position 37 in tRNAs that read codons beginning with uridine, leading to the formation of N6-(dimethylallyl)adenosine (i(6)A). The chain is tRNA dimethylallyltransferase from Chromohalobacter salexigens (strain ATCC BAA-138 / DSM 3043 / CIP 106854 / NCIMB 13768 / 1H11).